A 402-amino-acid polypeptide reads, in one-letter code: MSTKRVITKEDIHLKARLLSEGAKVTVNKPPASGFNPFRAMVLNGSDLATLVRQEPYTRLEVQVNGDDVEFYDCGQHLASGRMQEAFSWRSGKLSNGRPVDAAVIGMNQDIINIHYSYSCDNNNTGRSCRFCFFFADQHIGVGKELAKMPFSKIEELAKEQAEAVKIATDAGWRGTLVIIGGLVDPSRRAQVADLVELVMAPLREQVSPEVLNELHITANLYPPDDFKEMEKWKASGLNSTEFDLEVTHPDYFKAICPGKSATYPLEYWLEAQEASVKIFGPGRGTTSFILMGLEPMNIMLEGVEERMSKGVYPNMLVYQPVPGADMFRMPPPNADWLVEASEKVADLYIKYQDRFDMPLAKDHRPGYTRMGRSQYIILAGDMLAYKLQEQGYELPEAYPVC.

The Radical SAM core domain maps to 104–359 (VIGMNQDIIN…IKYQDRFDMP (256 aa)). Residues Cys120, Cys129, and Cys132 each coordinate [4Fe-4S] cluster.

It belongs to the radical SAM superfamily. It depends on [4Fe-4S] cluster as a cofactor.

It carries out the reaction a bacteriochlorophyllide c + 2 S-adenosyl-L-methionine + H2O = a bacteriochlorophyllide e + 2 5'-deoxyadenosine + 2 L-methionine + 2 H(+). The enzyme catalyses a bacteriochlorophyllide d + 2 S-adenosyl-L-methionine + H2O = a bacteriochlorophyllide f + 2 5'-deoxyadenosine + 2 L-methionine + 2 H(+). Its pathway is porphyrin-containing compound metabolism; bacteriochlorophyll biosynthesis. In terms of biological role, involved in the biosynthesis of bacteriochlorophyll e (BChl e). Catalyzes two consecutive hydroxylation reactions of the C-7 methyl group of bacteriochlorophyllide c (BChlide c) to form a geminal diol intermediate that spontaneously dehydrates to produce the formyl group of bacteriochlorophyllide e (BChlide e). Also able to catalyze the same reaction for bacteriochlorophyllide d (BChlide d) to give rise to bacteriochlorophyllide f (BChlide f). The protein is Bacteriochlorophyllide c C-7(1)-hydroxylase of Chlorobaculum limnaeum.